The sequence spans 182 residues: Sperm acrosome-associated protein 7 (182 aa).

The signal sequence occupies residues 1 to 24 (MAANRGSRTFLSVFLLCCWQGAEL). N40 carries an N-linked (GlcNAc...) asparagine glycan. Residues 112-140 (LPTKEESGKNDRSTVANLHDHSSQTKHEP) are compositionally biased toward basic and acidic residues. The segment at 112–154 (LPTKEESGKNDRSTVANLHDHSSQTKHEPPSSPEGKGSSNDDV) is disordered.

As to expression, testis-specific. Expressed in zygotene and pachytene spermatocytes, round spermatids, elongating spermatids and spermatozoa (at protein level). Testis-specific.

It is found in the secreted. The protein resides in the cytoplasmic vesicle. It localises to the secretory vesicle. The protein localises to the acrosome lumen. Functionally, involved in fertilization. Seems not to play a direct role in sperm-egg binding or gamete fusion. The protein is Sperm acrosome-associated protein 7 of Mus musculus (Mouse).